We begin with the raw amino-acid sequence, 491 residues long: Ketol-acid reductoisomerase (NADP(+)) (491 aa).

One can recognise a KARI N-terminal Rossmann domain in the interval 15–208; that stretch reads AQLGKCRFMG…GGHRAGVLES (194 aa). NADP(+) contacts are provided by residues 45–48, Arg68, Arg76, Ser78, and 108–110; these read CGAQ and DKQ. His132 is a catalytic residue. An NADP(+)-binding site is contributed by Gly158. KARI C-terminal knotted domains are found at residues 209-344 and 345-484; these read SFVA…TAPQ and YEGK…MTDM. Positions 217, 221, 389, and 393 each coordinate Mg(2+). Ser414 provides a ligand contact to substrate.

This sequence belongs to the ketol-acid reductoisomerase family. The cofactor is Mg(2+).

The enzyme catalyses (2R)-2,3-dihydroxy-3-methylbutanoate + NADP(+) = (2S)-2-acetolactate + NADPH + H(+). The catalysed reaction is (2R,3R)-2,3-dihydroxy-3-methylpentanoate + NADP(+) = (S)-2-ethyl-2-hydroxy-3-oxobutanoate + NADPH + H(+). The protein operates within amino-acid biosynthesis; L-isoleucine biosynthesis; L-isoleucine from 2-oxobutanoate: step 2/4. It participates in amino-acid biosynthesis; L-valine biosynthesis; L-valine from pyruvate: step 2/4. Its function is as follows. Involved in the biosynthesis of branched-chain amino acids (BCAA). Catalyzes an alkyl-migration followed by a ketol-acid reduction of (S)-2-acetolactate (S2AL) to yield (R)-2,3-dihydroxy-isovalerate. In the isomerase reaction, S2AL is rearranged via a Mg-dependent methyl migration to produce 3-hydroxy-3-methyl-2-ketobutyrate (HMKB). In the reductase reaction, this 2-ketoacid undergoes a metal-dependent reduction by NADPH to yield (R)-2,3-dihydroxy-isovalerate. In Shigella dysenteriae serotype 1 (strain Sd197), this protein is Ketol-acid reductoisomerase (NADP(+)).